A 400-amino-acid chain; its full sequence is MAEDKGVKNMLEHLVKNLLVEDVEEIELRNVTIELDELELDLKTVAQTLPVEIWERILKPEVEEKEREVEVPEYEPPVEEYEGCVAEVQIGATRSDGGSRDRVVVLGGERAYFPFEEPRPNPPVVTFDVFDTPDVGIPGPIREELGDVIEDPVDWARTVVKRYGVDIVTVHLVSTSPKLHDAPVEEAMETLEDILDAVKVPIIVGGSGDPEKDVEVFVKAAEVCEGERVMLSSINEDMDFERVVEAAKEHGHVVLTFAPVDVNLMKSLNKKVLNRGLSKEDVVMDPTTCALGYGIEYTIDVMTRIRLAALKGDEHLQMPISSGSTNAWAAREAWMKEESWGPREYRGPLWEAVTATTVALCGADLLMMFHPWAVQVVMEAMEYMAEGRVTGDAYVTDVIA.

It belongs to the CdhD family. As to quaternary structure, heterodimer of delta and gamma chains. The ACDS complex is made up of alpha, epsilon, beta, gamma and delta chains with a probable stoichiometry of (alpha(2)epsilon(2))(4)-beta(8)-(gamma(1)delta(1))(8).

In terms of biological role, part of a complex that catalyzes the reversible cleavage of acetyl-CoA, allowing autotrophic growth from CO(2). Probably maintains the overall quaternary structure of the ACDS complex. The polypeptide is Acetyl-CoA decarbonylase/synthase complex subunit delta (Methanopyrus kandleri (strain AV19 / DSM 6324 / JCM 9639 / NBRC 100938)).